Reading from the N-terminus, the 194-residue chain is Large ribosomal subunit protein bL9 (194 aa).

Residues 156–167 (RGEDISSRREDQ) are compositionally biased toward basic and acidic residues. The interval 156–194 (RGEDISSRREDQDAAAEAIAAAGEFFDPDAQQDEEPEQQ) is disordered. Over residues 181–194 (FDPDAQQDEEPEQQ) the composition is skewed to acidic residues.

The protein belongs to the bacterial ribosomal protein bL9 family.

Functionally, binds to the 23S rRNA. This chain is Large ribosomal subunit protein bL9, found in Rhodopseudomonas palustris (strain BisB5).